Consider the following 161-residue polypeptide: MQTIEQQIANVIEESLTDMGFELVLVKFKGVNPKVVEILIDSLNSEKISVEDCTKASRTISAILDVEDLIEAAYSLEVASSGLERPLVKFENYNRFLEREVKITLKELLNGKTRYQGKIIKAENNKIYLKCEEQEVLIDYDLIKNANLVLTEEVFKKLLKQ.

The protein belongs to the RimP family.

The protein localises to the cytoplasm. Its function is as follows. Required for maturation of 30S ribosomal subunits. This Rickettsia africae (strain ESF-5) protein is Ribosome maturation factor RimP.